Here is a 324-residue protein sequence, read N- to C-terminus: Inhibitor of growth protein 1 homolog (324 aa).

Positions A120–A237 are disordered. Low complexity predominate over residues S140–S169. Residues S170–H186 are compositionally biased toward gly residues. Low complexity predominate over residues S201 to S229. The PHD-type zinc finger occupies P271 to I320. 8 residues coordinate Zn(2+): C274, C276, C287, C292, H298, C301, C314, and C317.

The protein belongs to the ING family. Interacts with H3K4me3 and to a lesser extent with H3K4me2.

It localises to the nucleus. In terms of biological role, involved in regulation of the growth and differentiation transition (GDT) process, probably by regulating gene expression via histone modification. The polypeptide is Inhibitor of growth protein 1 homolog (Dictyostelium discoideum (Social amoeba)).